The sequence spans 984 residues: DNA polymerase (984 aa).

The tract at residues 804-827 (DNPGKKRKSTDDNEGPSPKRRVIT) is bipartite nuclear localization signal. A monopartite nuclear localization signal region spans residues 939-948 (CSVKRKRDDD). Residues 943–969 (RKRDDDDDNDDDDDDDCDSSDSENDTQ) form a disordered region. Acidic residues predominate over residues 947–966 (DDDDNDDDDDDDCDSSDSEN).

It belongs to the DNA polymerase type-B family.

It localises to the host nucleus. It catalyses the reaction DNA(n) + a 2'-deoxyribonucleoside 5'-triphosphate = DNA(n+1) + diphosphate. Its function is as follows. Replicates the viral genome, host DNA polymerases cannot substitute for the viral enzyme in this process. The polypeptide is DNA polymerase (POL) (Autographa californica nuclear polyhedrosis virus (AcMNPV)).